The chain runs to 366 residues: Alanine racemase (366 aa).

Residue K40 is the Proton acceptor; specific for D-alanine of the active site. At K40 the chain carries N6-(pyridoxal phosphate)lysine. R136 contacts substrate. Y263 functions as the Proton acceptor; specific for L-alanine in the catalytic mechanism. Residue M310 participates in substrate binding.

The protein belongs to the alanine racemase family. Requires pyridoxal 5'-phosphate as cofactor.

It carries out the reaction L-alanine = D-alanine. It participates in amino-acid biosynthesis; D-alanine biosynthesis; D-alanine from L-alanine: step 1/1. In terms of biological role, catalyzes the interconversion of L-alanine and D-alanine. May also act on other amino acids. The protein is Alanine racemase (alr) of Streptococcus pyogenes serotype M2 (strain MGAS10270).